The primary structure comprises 413 residues: Protein SLX4IP (413 aa).

Residues Lys61, Lys79, Lys167, Lys176, and Lys236 each participate in a glycyl lysine isopeptide (Lys-Gly) (interchain with G-Cter in SUMO2) cross-link. Disordered regions lie at residues 172–193 (RTKSKGTDVSKPQPSGDLVGRS) and 228–300 (SHQE…GSVE). Over residues 238 to 254 (ENVSQTQPGDTRSQQQL) the composition is skewed to polar residues. Glycyl lysine isopeptide (Lys-Gly) (interchain with G-Cter in SUMO2) cross-links involve residues Lys288, Lys344, and Lys353. Positions 363 to 413 (SSRHLVTNNPGQAQQSDSAAITEQLATDQGGPSKKRKKLQSYNRGCSGKKN) are disordered. Residues 364–389 (SRHLVTNNPGQAQQSDSAAITEQLAT) are compositionally biased toward polar residues. Thr389 is modified (phosphothreonine). Residue Lys396 forms a Glycyl lysine isopeptide (Lys-Gly) (interchain with G-Cter in SUMO2) linkage.

It belongs to the SLX4IP family. Interacts with SLX4/BTBD12; subunit of different structure-specific endonucleases.

The polypeptide is Protein SLX4IP (Slx4ip) (Mus musculus (Mouse)).